Consider the following 265-residue polypeptide: Phosphate import ATP-binding protein PstB (265 aa).

One can recognise an ABC transporter domain in the interval 18–260 (ISARDVQVFY…PEDPRTESYI (243 aa)). 50 to 57 (GPSGCGKS) is an ATP binding site.

Belongs to the ABC transporter superfamily. Phosphate importer (TC 3.A.1.7) family. As to quaternary structure, the complex is composed of two ATP-binding proteins (PstB), two transmembrane proteins (PstC and PstA) and a solute-binding protein (PstS).

The protein resides in the cell inner membrane. The catalysed reaction is phosphate(out) + ATP + H2O = ADP + 2 phosphate(in) + H(+). Its function is as follows. Part of the ABC transporter complex PstSACB involved in phosphate import. Responsible for energy coupling to the transport system. This Roseobacter denitrificans (strain ATCC 33942 / OCh 114) (Erythrobacter sp. (strain OCh 114)) protein is Phosphate import ATP-binding protein PstB.